Here is a 234-residue protein sequence, read N- to C-terminus: Probable transcriptional regulatory protein TcrX (234 aa).

The Response regulatory domain maps to 10-124 (TVLVVDDEPV…EVVLRLRALL (115 aa)). Residue Asp-59 is modified to 4-aspartylphosphate. A DNA-binding region (ompR/PhoB-type) is located at residues 135–232 (GAQLVVGDLV…LRGAGYVLKP (98 aa)).

In terms of processing, phosphorylated by TcrY.

The protein localises to the cytoplasm. Its function is as follows. Member of the two-component regulatory system TcrY/TcrX. The sequence is that of Probable transcriptional regulatory protein TcrX (tcrX) from Mycobacterium tuberculosis (strain ATCC 25618 / H37Rv).